A 127-amino-acid polypeptide reads, in one-letter code: UPF0325 protein VC_2264 (127 aa).

The protein belongs to the UPF0325 family.

This Vibrio cholerae serotype O1 (strain ATCC 39315 / El Tor Inaba N16961) protein is UPF0325 protein VC_2264.